We begin with the raw amino-acid sequence, 312 residues long: MCILMATRAHPDYELILISNRDEFLARKTHATCWHNNDFILSPYDLAKTSAEKQIFGTWSGINKEGKLATILNLKLDNEQNNTKSRSRGLLPFIFLSIHKADFEDWDNYKKFEGHYDGLKSTGDFNFFYGDVIKKQYKVIDSLGRTFDVLSSTCRKDLDSYMVVSNGKFYDSSSIPGQAWEKVKVARDSLENLVLENIESDEEKIISSCFQLASKSSLPSTISNPDVLQMVDPNVTMNTIYVPPLRRPPRDDLGASIPDGDYYGTRSQIVLLVSKDSTRVTFIERVLYSSDEDVRKYSVTSPKEEKRFKFKL.

This is an uncharacterized protein from Saccharomyces cerevisiae (strain ATCC 204508 / S288c) (Baker's yeast).